Reading from the N-terminus, the 361-residue chain is uncharacterized protein (361 aa).

33–40 contacts ATP; that stretch reads GPINSGKT.

It belongs to the archaeal ATPase family.

This is an uncharacterized protein from Methanocaldococcus jannaschii (strain ATCC 43067 / DSM 2661 / JAL-1 / JCM 10045 / NBRC 100440) (Methanococcus jannaschii).